Here is a 617-residue protein sequence, read N- to C-terminus: Zinc metalloproteinase nas-36 (617 aa).

Residues 1–22 (MRLCHSIILFNSLISISICSKA) form the signal peptide. The propeptide occupies 23–126 (DDPALLVASE…SKDKTKRLRR (104 aa)). Positions 127–322 (SFVSDKTATW…VATINTAYCK (196 aa)) constitute a Peptidase M12A domain. 9 cysteine pairs are disulfide-bonded: Cys-169–Cys-321, Cys-192–Cys-211, Cys-325–Cys-346, Cys-348–Cys-357, Cys-368–Cys-397, Cys-425–Cys-445, Cys-519–Cys-550, Cys-523–Cys-555, and Cys-535–Cys-540. Asn-174 is a glycosylation site (N-linked (GlcNAc...) asparagine). A Zn(2+)-binding site is contributed by His-219. The active site involves Glu-220. His-223 and His-229 together coordinate Zn(2+). Residues 317–358 (NTAYCKDECKSEKTKCENGGYMRPSKCSECLCPDGLGGEKCE) enclose the EGF-like domain. One can recognise a CUB domain in the interval 368–482 (CGGIIKLTEE…IGFKIQAKST (115 aa)). Residues 507-556 (PNVWADWGEWSMCSRTCGGCGIRSRVRSCRSKKCEGRRQEFGTCNLKACP) enclose the TSP type-1 domain.

It depends on Zn(2+) as a cofactor. As to expression, expressed in hypodermal cells. Also detected in the hypodermal seam cells in L4 larvae and young adults. In old adult hermaphrodites, it localizes to the vulva (at protein level).

It localises to the secreted. Its function is as follows. Metalloprotease. Involved in molting, a process during larval stages in which a new cuticle is formed and the old cuticle is shed. In Caenorhabditis elegans, this protein is Zinc metalloproteinase nas-36 (nas-36).